A 216-amino-acid chain; its full sequence is Thymidylate kinase (216 aa).

9-16 (GIEGSGKT) is an ATP binding site.

The protein belongs to the thymidylate kinase family.

The catalysed reaction is dTMP + ATP = dTDP + ADP. Its function is as follows. Phosphorylation of dTMP to form dTDP in both de novo and salvage pathways of dTTP synthesis. This Syntrophotalea carbinolica (strain DSM 2380 / NBRC 103641 / GraBd1) (Pelobacter carbinolicus) protein is Thymidylate kinase.